Consider the following 218-residue polypeptide: Small ribosomal subunit protein uS3 (218 aa).

The region spanning 38-106 is the KH type-2 domain; that stretch reads IRDYVAKRLS…RVHINIVEIK (69 aa).

This sequence belongs to the universal ribosomal protein uS3 family. In terms of assembly, part of the 30S ribosomal subunit. Forms a tight complex with proteins S10 and S14.

In terms of biological role, binds the lower part of the 30S subunit head. Binds mRNA in the 70S ribosome, positioning it for translation. This Listeria monocytogenes serotype 4b (strain F2365) protein is Small ribosomal subunit protein uS3.